Consider the following 130-residue polypeptide: Ribosome-binding factor A (130 aa).

Belongs to the RbfA family. Monomer. Binds 30S ribosomal subunits, but not 50S ribosomal subunits or 70S ribosomes.

The protein resides in the cytoplasm. Functionally, one of several proteins that assist in the late maturation steps of the functional core of the 30S ribosomal subunit. Associates with free 30S ribosomal subunits (but not with 30S subunits that are part of 70S ribosomes or polysomes). Required for efficient processing of 16S rRNA. May interact with the 5'-terminal helix region of 16S rRNA. The polypeptide is Ribosome-binding factor A (Lachnospira eligens (strain ATCC 27750 / DSM 3376 / VPI C15-48 / C15-B4) (Eubacterium eligens)).